Here is a 202-residue protein sequence, read N- to C-terminus: uncharacterized protein (202 aa).

An HTH tetR-type domain is found at 14–74; that stretch reads NAKTERILDV…AMADRYFQRC (61 aa).

This is an uncharacterized protein from Xanthobacter autotrophicus.